We begin with the raw amino-acid sequence, 541 residues long: Ascorbate transporter, chloroplastic (541 aa).

The N-terminal 28 residues, 1–28 (MALGGLISNRNFGSFIGSGNGCQRLGKS), are a transit peptide targeting the chloroplast. 11 consecutive transmembrane segments (helical) span residues 133-155 (VIVL…MSIA), 170-190 (VGLI…LGGI), 199-219 (VVLG…PIAA), 221-241 (LGLP…GVAM), 263-283 (LVYS…PMLI), 286-306 (FGWP…FLLW), 352-372 (VWAL…LLTW), 390-410 (LLCV…GWIA), 430-450 (IGFL…TPAM), 481-501 (AGVL…FGTA), and 515-535 (VFKV…LFAT).

The protein belongs to the major facilitator superfamily. Sodium/anion cotransporter (TC 2.A.1.14) family. In terms of tissue distribution, expressed in stems, developing siliques, leaf mesophyll cells and sepals of mature flowers. Not detected in roots. Detected in palisade tissue rather than spongy tissue from the leaves.

Its subcellular location is the plastid. The protein resides in the chloroplast inner membrane. Its activity is regulated as follows. Insensitive to dehydroascorbate, p-isoascorbate, inorganic phosphate, glutamate, ATP, p-aminohippuric acid or tetraethylammonium. In terms of biological role, inorganic phosphate and probable anion transporter. Ascorbate transporter bridging the chloroplast envelope. Transports ascorbate from the cytosol into the chloroplast. Requires chloride ions and the presence of an electrochemical potential across the membrane for activity. The polypeptide is Ascorbate transporter, chloroplastic (PHT4;4) (Arabidopsis thaliana (Mouse-ear cress)).